The chain runs to 141 residues: Transcription antitermination protein NusB (141 aa).

This sequence belongs to the NusB family.

Its function is as follows. Involved in transcription antitermination. Required for transcription of ribosomal RNA (rRNA) genes. Binds specifically to the boxA antiterminator sequence of the ribosomal RNA (rrn) operons. This chain is Transcription antitermination protein NusB, found in Neisseria gonorrhoeae (strain ATCC 700825 / FA 1090).